We begin with the raw amino-acid sequence, 96 residues long: Growth-regulated alpha protein (96 aa).

Positions 1–24 (MIPATRSLLCAALLLLATSRLATG) are cleaved as a signal peptide. Cystine bridges form between cysteine 33–cysteine 59 and cysteine 35–cysteine 75.

Belongs to the intercrine alpha (chemokine CxC) family. The N-terminal processed form KC(5-72) is produced by proteolytic cleavage after secretion from bone marrow stromal cells.

Its subcellular location is the secreted. Has chemotactic activity for neutrophils. Contributes to neutrophil activation during inflammation. Hematoregulatory chemokine, which, in vitro, suppresses hematopoietic progenitor cell proliferation. KC(5-72) shows a highly enhanced hematopoietic activity. This is Growth-regulated alpha protein (Cxcl1) from Mus musculus (Mouse).